Consider the following 249-residue polypeptide: Portal protein (249 aa).

The protein belongs to the phi29likevirus portal protein family. Homododecamer. Interacts with the pRNA.

The protein localises to the virion. Forms the portal vertex of the capsid. This portal plays critical roles in head assembly, genome packaging, neck/tail attachment, and genome ejection. The portal protein multimerizes as a single ring-shaped homododecamer arranged around a central channel. Binds to the 6 packaging RNA molecules (pRNA) forming a double-ring structure which in turn binds to the ATPase gp16 hexamer, forming the active DNA-translocating motor. This complex is essential for the specificity of packaging from the left DNA end. The chain is Portal protein from Staphylococcus phage 44AHJD.